The sequence spans 343 residues: L-rhamnose-proton symporter (343 aa).

Transmembrane regions (helical) follow at residues 4–24 (AIIL…CFYA), 38–58 (WSIG…YLLL), 68–88 (FSIA…IGNI), 101–121 (MGIG…TPIL), 137–157 (TLLG…AGLL), 175–195 (LILA…MDAA), 207–227 (INSL…GAII), 254–274 (LLIT…LQFF), 289–309 (MSWM…GLLL), and 320–340 (VAVL…VGLG).

This sequence belongs to the L-rhamnose transporter (TC 2.A.7.6) family.

The protein resides in the cell inner membrane. The catalysed reaction is L-rhamnopyranose(in) + H(+)(in) = L-rhamnopyranose(out) + H(+)(out). In terms of biological role, uptake of L-rhamnose across the cytoplasmic membrane with the concomitant transport of protons into the cell (symport system). The sequence is that of L-rhamnose-proton symporter from Yersinia pestis bv. Antiqua (strain Antiqua).